Here is a 1204-residue protein sequence, read N- to C-terminus: ATP-dependent helicase/nuclease subunit A (1204 aa).

The UvrD-like helicase ATP-binding domain occupies 2–469; that stretch reads TNFTKEQDQA…IILADNFRST (468 aa). Position 23 to 30 (23 to 30) interacts with ATP; it reads ASAGSGKT. Residues 497 to 784 enclose the UvrD-like helicase C-terminal domain; it reads GQLQFGASYY…KLMTIHASKG (288 aa).

It belongs to the helicase family. AddA subfamily. Heterodimer of AddA and AddB/RexB. The cofactor is Mg(2+).

The catalysed reaction is Couples ATP hydrolysis with the unwinding of duplex DNA by translocating in the 3'-5' direction.. It carries out the reaction ATP + H2O = ADP + phosphate + H(+). The heterodimer acts as both an ATP-dependent DNA helicase and an ATP-dependent, dual-direction single-stranded exonuclease. Recognizes the chi site generating a DNA molecule suitable for the initiation of homologous recombination. The AddA nuclease domain is required for chi fragment generation; this subunit has the helicase and 3' -&gt; 5' nuclease activities. This Lactobacillus gasseri (strain ATCC 33323 / DSM 20243 / BCRC 14619 / CIP 102991 / JCM 1131 / KCTC 3163 / NCIMB 11718 / NCTC 13722 / AM63) protein is ATP-dependent helicase/nuclease subunit A.